The following is a 60-amino-acid chain: UPF0434 protein ETA_21370 (60 aa).

Belongs to the UPF0434 family.

This Erwinia tasmaniensis (strain DSM 17950 / CFBP 7177 / CIP 109463 / NCPPB 4357 / Et1/99) protein is UPF0434 protein ETA_21370.